Reading from the N-terminus, the 523-residue chain is MAAIRDYKTALDFTKSLPRPDGLSVQELMDSKIRGGLTYNDFLILPGLVDFASSEVSLQTKLTRNITLNIPLVSSPMDTVTESEMATFMALLGGIGFIHHNCTPEDQADMVRRVKNYENGFINNPIVISPTTTVGEAKSMKEKYGFAGFPVTTDGKRNAKLVGVITSRDIQFVEDNSLLVQDVMTKNPVTGAQGITLSEGNEILKKIKKGRLLVVDEKGNLVSMLSRTDLMKNQNYPLASKSANTKQLLCGASIGTMDADKERLRLLVKAGLDVVILDSSQGNSIFELNMLKWVKESFPGLEVIAGNVVTREQAANLIAAGADGLRIGMGTGSICITQEVMACGRPQGTAVYNVCEFANQFGVPCMADGGVQNIGHITKALALGSSTVMMGGMLAGTTESPGEYFYQDGKRLKAYRGMGSIDAMQKTGTKGNASTSRYFSESDSVLVAQGVSGAVVDKGSIKKFIPYLYNGLQHSCQDIGCRSLTLLKNNVQRGKVRFEFRTASAQLEGGVHNLHSYEKRLHN.

CBS domains are found at residues 121-183 (FINN…VQDV) and 184-240 (MTKN…PLAS). NAD(+) contacts are provided by residues 278 to 280 (DSS) and 328 to 330 (GMG). Residues Gly330 and Gly332 each coordinate K(+). Residue Ser333 coordinates IMP. Cys335 lines the K(+) pocket. Residue Cys335 is the Thioimidate intermediate of the active site. IMP-binding positions include 368-370 (DGG), 391-392 (GG), and 415-419 (YRGMG). Catalysis depends on Arg437, which acts as the Proton acceptor. Gln449 is a binding site for IMP. K(+)-binding residues include Glu508, Gly509, and Gly510.

This sequence belongs to the IMPDH/GMPR family. Homotetramer. Seems to be able to form heterotetramers composed from more than 1 of the 3 IMPDH gene products (IMD2-4). The cofactor is K(+).

It localises to the cytoplasm. It catalyses the reaction IMP + NAD(+) + H2O = XMP + NADH + H(+). It functions in the pathway purine metabolism; XMP biosynthesis via de novo pathway; XMP from IMP: step 1/1. Mycophenolic acid (MPA) is a non-competitive inhibitor that prevents formation of the closed enzyme conformation by binding to the same site as the amobile flap. In contrast, mizoribine monophosphate (MZP) is a competitive inhibitor that induces the closed conformation. MPA is a potent inhibitor of mammalian IMPDHs but a poor inhibitor of the bacterial enzymes. MZP is a more potent inhibitor of bacterial IMPDH. Functionally, catalyzes the conversion of inosine 5'-phosphate (IMP) to xanthosine 5'-phosphate (XMP), the first committed and rate-limiting step in the de novo synthesis of guanine nucleotides, and therefore plays an important role in the regulation of cell growth. In contrast to the other IMPDH alleles IMD3 and IMD4, the enzymatic activity of IMD2 seems to be intrinsically drug resistant. This chain is Inosine-5'-monophosphate dehydrogenase 2, found in Saccharomyces cerevisiae (strain ATCC 204508 / S288c) (Baker's yeast).